The primary structure comprises 555 residues: MSDIEIARAATKKPIQQIGATLGIGADDLLPYGHDKAKVSQSFITSVQDRPNGKLILVTAINPTPAGEGKTTTTVGLGDGLNRIGKKACVCIREASLGPNFGMKGGAAGGGHAQVIPMEDMNLHFTGDFHAITSAHSLLSAMIDNHIYWGNELEIDIRRVTWRRVVDMNDRALRQITASLGGVANGFPREAGFDITVASEVMAILCLARDLKDLEQRLGDMIVAYRRDRSPVYCRDIKAEGAMTVLLKDAMQPNLVQTLENNPAFVHGGPFANIAHGCNSVIATTTALKLADFVVTEAGFGADLGAEKFMNIKCRKAGLAPDCVVLVATVRAMKMNGGVAKADLGAENVAAVQAGCANLGRHIGNLQGFGVPVVVAINHFVTDTEAEIQAVKDYVAGQGAEAILSRHWELGSEGSAALATRVAEIAESGASQFSPLYPDAMPLLEKIETIAKRIYHAEKVIADNKIVDQLKLWEEQGYGHLPICMAKTQYSFSTDPNERGAPTGHAIPVREVRLSAGAGFVVVVCGEIMTMPGLPRVPSAEHIRLNDAGEVEGLF.

64–71 (TPAGEGKT) is an ATP binding site.

Belongs to the formate--tetrahydrofolate ligase family.

The enzyme catalyses (6S)-5,6,7,8-tetrahydrofolate + formate + ATP = (6R)-10-formyltetrahydrofolate + ADP + phosphate. It functions in the pathway one-carbon metabolism; tetrahydrofolate interconversion. This Dinoroseobacter shibae (strain DSM 16493 / NCIMB 14021 / DFL 12) protein is Formate--tetrahydrofolate ligase.